We begin with the raw amino-acid sequence, 312 residues long: Tyrosine recombinase XerC (312 aa).

Positions 1–103 (MISAFYAFLD…AIKSFSQYCI (103 aa)) constitute a Core-binding (CB) domain. The region spanning 124-306 (ELPSPITYEQ…SMKLKKQTHE (183 aa)) is the Tyr recombinase domain. Residues arginine 164, lysine 188, histidine 258, arginine 261, and histidine 284 contribute to the active site. Tyrosine 293 serves as the catalytic O-(3'-phospho-DNA)-tyrosine intermediate.

This sequence belongs to the 'phage' integrase family. XerC subfamily. As to quaternary structure, forms a cyclic heterotetrameric complex composed of two molecules of XerC and two molecules of XerD.

The protein localises to the cytoplasm. Functionally, site-specific tyrosine recombinase, which acts by catalyzing the cutting and rejoining of the recombining DNA molecules. The XerC-XerD complex is essential to convert dimers of the bacterial chromosome into monomers to permit their segregation at cell division. It also contributes to the segregational stability of plasmids. This Chlamydia caviae (strain ATCC VR-813 / DSM 19441 / 03DC25 / GPIC) (Chlamydophila caviae) protein is Tyrosine recombinase XerC.